Here is a 300-residue protein sequence, read N- to C-terminus: m7GpppN-mRNA hydrolase NUDT17 (300 aa).

Residues 88-239 (SRGVDVGVAV…KECVQIPADL (152 aa)) enclose the Nudix hydrolase domain. The Nudix box motif lies at 127-148 (GHVELDEKLLDAGLRELLEETG). Glu142 and Glu146 together coordinate Mg(2+).

It belongs to the Nudix hydrolase family. Requires Mg(2+) as cofactor. It depends on Mn(2+) as a cofactor.

It carries out the reaction a 5'-end (N(7)-methyl 5'-triphosphoguanosine)-ribonucleoside in mRNA + H2O = N(7)-methyl-GDP + a 5'-end phospho-ribonucleoside in mRNA + 2 H(+). Functionally, acts as a decapping enzyme capable of hydrolyzing monomethylated capped RNAs (in vitro). Hydrolyzes monomethylated capped RNA after alpha and beta phosphates to form N(7)-methyl-GDP. Shows low activity towards unmethylated capped RNA. The protein is m7GpppN-mRNA hydrolase NUDT17 (nudt17) of Danio rerio (Zebrafish).